A 901-amino-acid chain; its full sequence is Protein translocase subunit SecA (901 aa).

Residues Gln87, Gly105–Thr109, and Asp512 each bind ATP. Zn(2+) contacts are provided by Cys885, Cys887, Cys896, and His897.

Belongs to the SecA family. Monomer and homodimer. Part of the essential Sec protein translocation apparatus which comprises SecA, SecYEG and auxiliary proteins SecDF-YajC and YidC. The cofactor is Zn(2+).

Its subcellular location is the cell inner membrane. It localises to the cytoplasm. The enzyme catalyses ATP + H2O + cellular proteinSide 1 = ADP + phosphate + cellular proteinSide 2.. In terms of biological role, part of the Sec protein translocase complex. Interacts with the SecYEG preprotein conducting channel. Has a central role in coupling the hydrolysis of ATP to the transfer of proteins into and across the cell membrane, serving both as a receptor for the preprotein-SecB complex and as an ATP-driven molecular motor driving the stepwise translocation of polypeptide chains across the membrane. This chain is Protein translocase subunit SecA, found in Salmonella paratyphi A (strain ATCC 9150 / SARB42).